The chain runs to 164 residues: MLVTVGSMNERVPDSSGLPLRAMVMVLLFLGVVFLLLVWQALGSSPNSEDDSSAISTMTTTTAAPTSTSVKPAAPRAEVRVYNISGTEGAAARTADRLKAAGFTVTDVGNLSLPDVAATTVYYTEVEGERATADAVGRTLGAAVELRLPELSDQPPGVIVVVTG.

In terms of processing, could be O-mannosylated. Is likely mannosylated on Thr-61 when overexpressed in M.smegmatis.

It is found in the cell inner membrane. It localises to the cytoplasm. Its function is as follows. Virulence factor that regulates vesiculogenesis. Acts by regulating the production of mycobacterial membrane vesicles (MV) bearing Toll-like receptor 2 (TLR2) ligands, including the lipoproteins LpqH, a major host TLR2 agonist, and SodC. By restraining the release of most of the material that activates host cells through TLR2, VirR reduces the immunostimulant potential of M.tuberculosis and increases its virulence. May contribute to cell envelope integrity. When overexpressed in M.smegmatis, it modulates the production of IL-10, IL-12 p40 and TNF-alpha by RAW264.7 macrophages and it decreases the killing of M.smegmatis. This Mycobacterium tuberculosis (strain ATCC 25618 / H37Rv) protein is Vesiculogenesis and immune response regulator.